The following is a 626-amino-acid chain: Nuclear RNA export factor 1 (626 aa).

Positions 1–16 (MADEGKSYSEHDDERV) are enriched in basic and acidic residues. The interval 1-85 (MADEGKSYSE…TTRPNRRGDA (85 aa)) is disordered. The residue at position 2 (alanine 2) is an N-acetylalanine. A minor non-specific RNA-binding region spans residues 2-60 (ADEGKSYSEHDDERVNFPQRKKKGRGPFRWKYGEGNRRSGRGGSGIRSSRLEEDDGDVA). An RNA-binding (RBD) region spans residues 2-118 (ADEGKSYSEH…GTSQDGTSKN (117 aa)). Residues 2–198 (ADEGKSYSEH…IIINPSAPPH (197 aa)) are interaction with ALYREF/THOC4 and LUZP4. Serine 9 is subject to Phosphoserine. Residues 20–29 (QRKKKGRGPF) show a composition bias toward basic residues. Arginine 42 carries the post-translational modification Asymmetric dimethylarginine; alternate. An Omega-N-methylarginine; alternate modification is found at arginine 42. Positions 61–118 (MSDAQDGPRVRYNPYTTRPNRRGDAWHDRDRIHVTVRRDRAPPERGGAGTSQDGTSKN) are major non-specific RNA-binding. The RNA binding stretch occupies residues 61–118 (MSDAQDGPRVRYNPYTTRPNRRGDAWHDRDRIHVTVRRDRAPPERGGAGTSQDGTSKN). The Nuclear localization signal signature appears at 67–100 (GPRVRYNPYTTRPNRRGDAWHDRDRIHVTVRRDR). Residues 83–110 (GDAWHDRDRIHVTVRRDRAPPERGGAGT) carry the Nuclear export signal motif. The RRM domain occupies 119-198 (WFKITIPYGR…IIINPSAPPH (80 aa)). Tyrosine 126 is subject to 3'-nitrotyrosine. LRR repeat units follow at residues 266–291 (ELLS…QKVP), 292–315 (NLKI…IKGL), 316–350 (KLEE…AIRE), and 351–378 (RFPK…TTLP). Positions 393–543 (LVLHFLQQYY…LCIVNDELFV (151 aa)) constitute an NTF2 domain. Positions 572–626 (PEQQEMLQAFSTQSGMNLEWSQKCLQDNNWDYTRSAQAFTHLKAKGEIPEVAFMK) constitute a TAP-C domain.

This sequence belongs to the NXF family. As to quaternary structure, heterodimer (via NTF2 domain) with NXT1. The formation of NXF1-NXT1 heterodimers is required for the NXF1-mediated nuclear mRNA export. Forms a complex with RANBP2/NUP358, NXT1 and RANGAP1. Associates with the exon junction complex (EJC) and with the transcription/export (TREX) complex. Found in a mRNA complex with UPF3A and UPF3B. Found in a post-splicing complex with RBM8A, UPF1, UPF2, UPF3A, UPF3B and RNPS1. Interacts (via N-terminus) with DHX9 (via N-terminus); this interaction is direct and negatively regulates NXF1-mediated nuclear export of constitutive transport element (CTE)-containing cellular mRNAs. Interacts with ALYREF/THOC4. Interacts with FYTTD1/UIF. Interacts with EIF4A3. Interacts with NUPL2. Interacts with THOC5. Interacts with CHTOP. Interacts with FRG1 (via N-terminus). Interacts with LUZP4. Interacts with FMR1; the interaction occurs in a mRNA-dependent and polyribosomes-independent manner in the nucleus. Interacts with CPSF6 (via N-terminus); this interaction is direct. Interacts with RBM15. Interacts with RBM15B. Interacts with MCM3AP; this interaction is not mediated by RNA.

The protein localises to the nucleus. The protein resides in the nucleoplasm. It localises to the nucleus speckle. Its subcellular location is the cytoplasm. Functionally, involved in the nuclear export of mRNA species bearing retroviral constitutive transport elements (CTE) and in the export of mRNA from the nucleus to the cytoplasm (TAP/NFX1 pathway). The NXF1-NXT1 heterodimer is involved in the export of HSP70 mRNA in conjunction with ALYREF/THOC4 and THOC5 components of the TREX complex. ALYREF/THOC4-bound mRNA is thought to be transferred to the NXF1-NXT1 heterodimer for export. Also involved in nuclear export of m6A-containing mRNAs: interaction between SRSF3 and YTHDC1 facilitates m6A-containing mRNA-binding to both SRSF3 and NXF1, promoting mRNA nuclear export. This is Nuclear RNA export factor 1 (NXF1) from Pongo abelii (Sumatran orangutan).